The chain runs to 301 residues: Probable protein phosphatase 2C 4 (301 aa).

Polar residues predominate over residues 1-18 (MGPYLSQPNKNKTTTSGE). The tract at residues 1 to 20 (MGPYLSQPNKNKTTTSGEGK) is disordered. The PPM-type phosphatase domain maps to 23–298 (IFAASEMQGW…DNMTTLIIYL (276 aa)). The Mn(2+) site is built by aspartate 57, glycine 58, aspartate 237, and aspartate 289.

This sequence belongs to the PP2C family. Requires Mg(2+) as cofactor. Mn(2+) serves as cofactor.

The protein localises to the membrane. It catalyses the reaction O-phospho-L-seryl-[protein] + H2O = L-seryl-[protein] + phosphate. It carries out the reaction O-phospho-L-threonyl-[protein] + H2O = L-threonyl-[protein] + phosphate. Enzyme with a broad specificity. This Paramecium tetraurelia protein is Probable protein phosphatase 2C 4.